The primary structure comprises 117 residues: UPF0295 protein GK0479 (117 aa).

2 helical membrane passes run 12 to 32 (IRTF…LGLF) and 42 to 62 (LFML…FWIG).

Belongs to the UPF0295 family.

It localises to the cell membrane. The protein is UPF0295 protein GK0479 of Geobacillus kaustophilus (strain HTA426).